Consider the following 447-residue polypeptide: Tubulin beta-6 chain (447 aa).

Q11, E69, S138, G142, T143, G144, N204, and N226 together coordinate GTP. E69 serves as a coordination point for Mg(2+). The disordered stretch occupies residues 426–447 (QDATAEEEGEFDEDEELDDGMM). The span at 429-447 (TAEEEGEFDEDEELDDGMM) shows a compositional bias: acidic residues.

It belongs to the tubulin family. As to quaternary structure, dimer of alpha and beta chains. A typical microtubule is a hollow water-filled tube with an outer diameter of 25 nm and an inner diameter of 15 nM. Alpha-beta heterodimers associate head-to-tail to form protofilaments running lengthwise along the microtubule wall with the beta-tubulin subunit facing the microtubule plus end conferring a structural polarity. Microtubules usually have 13 protofilaments but different protofilament numbers can be found in some organisms and specialized cells. It depends on Mg(2+) as a cofactor.

Its subcellular location is the cytoplasm. It is found in the cytoskeleton. Functionally, tubulin is the major constituent of microtubules, a cylinder consisting of laterally associated linear protofilaments composed of alpha- and beta-tubulin heterodimers. Microtubules grow by the addition of GTP-tubulin dimers to the microtubule end, where a stabilizing cap forms. Below the cap, tubulin dimers are in GDP-bound state, owing to GTPase activity of alpha-tubulin. The protein is Tubulin beta-6 chain (TUBB6) of Ectocarpus variabilis (Brown alga).